The chain runs to 360 residues: Aminomethyltransferase (360 aa).

This sequence belongs to the GcvT family. As to quaternary structure, the glycine cleavage system is composed of four proteins: P, T, L and H.

The catalysed reaction is N(6)-[(R)-S(8)-aminomethyldihydrolipoyl]-L-lysyl-[protein] + (6S)-5,6,7,8-tetrahydrofolate = N(6)-[(R)-dihydrolipoyl]-L-lysyl-[protein] + (6R)-5,10-methylene-5,6,7,8-tetrahydrofolate + NH4(+). Its function is as follows. The glycine cleavage system catalyzes the degradation of glycine. The chain is Aminomethyltransferase from Pseudomonas aeruginosa (strain ATCC 15692 / DSM 22644 / CIP 104116 / JCM 14847 / LMG 12228 / 1C / PRS 101 / PAO1).